The chain runs to 299 residues: Cathepsin B-like CP3 (299 aa).

Positions 1-19 (MKLFLLAAAAFSAPALTVS) are cleaved as a signal peptide. Intrachain disulfides connect Cys-87/Cys-114, Cys-97/Cys-140, and Cys-133/Cys-176. Residue Cys-100 is part of the active site. Catalysis depends on residues His-244 and Asn-265.

Belongs to the peptidase C1 family.

The protein resides in the vacuole. Thiol protease which is required for parasite excystation and invasion of the proximal small intestine of the human host. This is Cathepsin B-like CP3 (CP3) from Giardia intestinalis (Giardia lamblia).